The following is a 513-amino-acid chain: Ribonuclease Y (513 aa).

Residues 4–24 (NTAIIIAITTGFVAFIGGYFL) form a helical membrane-spanning segment. The region spanning 203–266 (TVAVIPLPNE…ETARMALEKL (64 aa)) is the KH domain. The HD domain occupies 329–422 (VLKHSVEVAY…IQAADAISAA (94 aa)).

This sequence belongs to the RNase Y family.

The protein resides in the cell membrane. In terms of biological role, endoribonuclease that initiates mRNA decay. This chain is Ribonuclease Y, found in Desulforudis audaxviator (strain MP104C).